A 272-amino-acid chain; its full sequence is tRNA pseudouridine synthase B (272 aa).

The Nucleophile role is filled by Asp-38.

The protein belongs to the pseudouridine synthase TruB family. Type 1 subfamily.

It carries out the reaction uridine(55) in tRNA = pseudouridine(55) in tRNA. In terms of biological role, responsible for synthesis of pseudouridine from uracil-55 in the psi GC loop of transfer RNAs. This Campylobacter jejuni subsp. jejuni serotype O:23/36 (strain 81-176) protein is tRNA pseudouridine synthase B.